Here is a 416-residue protein sequence, read N- to C-terminus: Tyrosine--tRNA ligase (416 aa).

Tyr41 lines the L-tyrosine pocket. The 'HIGH' region signature appears at Ala46–His55. 2 residues coordinate L-tyrosine: Tyr175 and Gln179. A 'KMSKS' region motif is present at residues Lys235–Thr239. Position 238 (Lys238) interacts with ATP. The S4 RNA-binding domain maps to Leu349–Val416.

Belongs to the class-I aminoacyl-tRNA synthetase family. TyrS type 1 subfamily. In terms of assembly, homodimer.

Its subcellular location is the cytoplasm. It catalyses the reaction tRNA(Tyr) + L-tyrosine + ATP = L-tyrosyl-tRNA(Tyr) + AMP + diphosphate + H(+). Its function is as follows. Catalyzes the attachment of tyrosine to tRNA(Tyr) in a two-step reaction: tyrosine is first activated by ATP to form Tyr-AMP and then transferred to the acceptor end of tRNA(Tyr). This Xanthobacter autotrophicus (strain ATCC BAA-1158 / Py2) protein is Tyrosine--tRNA ligase.